A 45-amino-acid chain; its full sequence is Photosystem II reaction center protein K (45 aa).

A propeptide spanning residues 1-8 (MEAALLLA) is cleaved from the precursor. The chain crosses the membrane as a helical span at residues 24-44 (LPIIPLFFLALAFVWQAAVGF).

This sequence belongs to the PsbK family. In terms of assembly, PSII is composed of 1 copy each of membrane proteins PsbA, PsbB, PsbC, PsbD, PsbE, PsbF, PsbH, PsbI, PsbJ, PsbK, PsbL, PsbM, PsbT, PsbX, PsbY, PsbZ, Psb30/Ycf12, peripheral proteins PsbO, CyanoQ (PsbQ), PsbU, PsbV and a large number of cofactors. It forms dimeric complexes.

The protein resides in the cellular thylakoid membrane. Functionally, one of the components of the core complex of photosystem II (PSII). PSII is a light-driven water:plastoquinone oxidoreductase that uses light energy to abstract electrons from H(2)O, generating O(2) and a proton gradient subsequently used for ATP formation. It consists of a core antenna complex that captures photons, and an electron transfer chain that converts photonic excitation into a charge separation. The polypeptide is Photosystem II reaction center protein K (Rippkaea orientalis (strain PCC 8801 / RF-1) (Cyanothece sp. (strain PCC 8801))).